Reading from the N-terminus, the 264-residue chain is Glutamate racemase (264 aa).

Substrate is bound by residues D10 to S11 and Y42 to G43. Catalysis depends on C73, which acts as the Proton donor/acceptor. A substrate-binding site is contributed by N74–T75. C183 (proton donor/acceptor) is an active-site residue. T184–H185 provides a ligand contact to substrate.

It belongs to the aspartate/glutamate racemases family.

It catalyses the reaction L-glutamate = D-glutamate. It participates in cell wall biogenesis; peptidoglycan biosynthesis. Its function is as follows. Provides the (R)-glutamate required for cell wall biosynthesis. This Streptococcus pyogenes serotype M3 (strain ATCC BAA-595 / MGAS315) protein is Glutamate racemase.